We begin with the raw amino-acid sequence, 319 residues long: Lipoyl synthase (319 aa).

Residues cysteine 61, cysteine 66, cysteine 72, cysteine 87, cysteine 91, cysteine 94, and serine 300 each contribute to the [4Fe-4S] cluster site. Positions tryptophan 73–leucine 289 constitute a Radical SAM core domain.

The protein belongs to the radical SAM superfamily. Lipoyl synthase family. The cofactor is [4Fe-4S] cluster.

The protein localises to the cytoplasm. It carries out the reaction [[Fe-S] cluster scaffold protein carrying a second [4Fe-4S](2+) cluster] + N(6)-octanoyl-L-lysyl-[protein] + 2 oxidized [2Fe-2S]-[ferredoxin] + 2 S-adenosyl-L-methionine + 4 H(+) = [[Fe-S] cluster scaffold protein] + N(6)-[(R)-dihydrolipoyl]-L-lysyl-[protein] + 4 Fe(3+) + 2 hydrogen sulfide + 2 5'-deoxyadenosine + 2 L-methionine + 2 reduced [2Fe-2S]-[ferredoxin]. It participates in protein modification; protein lipoylation via endogenous pathway; protein N(6)-(lipoyl)lysine from octanoyl-[acyl-carrier-protein]: step 2/2. Catalyzes the radical-mediated insertion of two sulfur atoms into the C-6 and C-8 positions of the octanoyl moiety bound to the lipoyl domains of lipoate-dependent enzymes, thereby converting the octanoylated domains into lipoylated derivatives. This Rhodopseudomonas palustris (strain BisB18) protein is Lipoyl synthase.